The following is a 259-amino-acid chain: uncharacterized protein (259 aa).

Positions 82 to 128 (NSGMAETIEEKREDFQKEEKEDFTEEQNIEDLLAAVADAEGRYQTNQ) form a coiled coil. Residues 192 to 259 (LIQTQNQHPR…SSSRNSSTTS (68 aa)) are disordered. Basic residues predominate over residues 228–240 (KKVHARSRKRRKT). Positions 241-259 (SSSSSSSSSSSSRNSSTTS) are enriched in low complexity.

This is an uncharacterized protein from Homo sapiens (Human).